We begin with the raw amino-acid sequence, 60 residues long: Mastoparan-D (60 aa).

The signal sequence occupies residues 1-27; sequence MKNTILILFTAFIALLGFFGMSAEALA. AXPX repeat units follow at residues 27–30, 31–34, 35–38, and 41–44; these read ADPI, ADPV, AGPN, and ADPE. A propeptide spanning residues 28-45 is cleaved from the precursor; sequence DPIADPVAGPNPEADPEA. Position 59 is a leucine amide (Leu-59).

It belongs to the MCD family. Mastoparan subfamily. In terms of tissue distribution, expressed by the venom gland.

The protein resides in the secreted. Its subcellular location is the target cell membrane. Antimicrobial and mast cell degranulating peptide. Has broad spectrum antibacterial activity against both Gram-positive and Gram-negative bacteria (S.aureus MIC=24-32 ug/ml, S.xylosus MIC=2 ug/ml, S.alactolyticus MIC=16 ug/ml, C.koseri MIC=4 ug/ml, E.coli MIC=8 ug/ml, K.pneumoniae MIC=32 ug/ml, P.aerugiosa MIC=128 ug/ml, S.choleraesuis MIC=16 ug/ml, S.typhimurium MIC=32 ug/ml, V.parahamelytics MIC=32 ug/ml). Affects membrane permeability of E.coli. Shows hemolytic activities on sheep, chicken and human erythrocytes. Its mast cell degranulation activity may be related to the activation of G-protein coupled receptors in mast cells as well as interaction with other proteins located in cell endosomal membranes in the mast cells. This is Mastoparan-D from Vespa ducalis (Black-tailed hornet).